The following is a 263-amino-acid chain: Acyl-[acyl-carrier-protein]--UDP-N-acetylglucosamine O-acyltransferase (263 aa).

The protein belongs to the transferase hexapeptide repeat family. LpxA subfamily. As to quaternary structure, homotrimer.

Its subcellular location is the cytoplasm. It catalyses the reaction a (3R)-hydroxyacyl-[ACP] + UDP-N-acetyl-alpha-D-glucosamine = a UDP-3-O-[(3R)-3-hydroxyacyl]-N-acetyl-alpha-D-glucosamine + holo-[ACP]. It functions in the pathway glycolipid biosynthesis; lipid IV(A) biosynthesis; lipid IV(A) from (3R)-3-hydroxytetradecanoyl-[acyl-carrier-protein] and UDP-N-acetyl-alpha-D-glucosamine: step 1/6. Functionally, involved in the biosynthesis of lipid A, a phosphorylated glycolipid that anchors the lipopolysaccharide to the outer membrane of the cell. The sequence is that of Acyl-[acyl-carrier-protein]--UDP-N-acetylglucosamine O-acyltransferase from Xanthomonas axonopodis pv. citri (strain 306).